A 264-amino-acid polypeptide reads, in one-letter code: Thymidylate synthase (264 aa).

Residue Arg21 coordinates dUMP. (6R)-5,10-methylene-5,6,7,8-tetrahydrofolate is bound at residue His51. A dUMP-binding site is contributed by Arg126–Arg127. Cys146 (nucleophile) is an active-site residue. Residues Arg166–Asp169, Asn177, and His207–Tyr209 contribute to the dUMP site. Asp169 contacts (6R)-5,10-methylene-5,6,7,8-tetrahydrofolate. Ser263 contacts (6R)-5,10-methylene-5,6,7,8-tetrahydrofolate.

This sequence belongs to the thymidylate synthase family. Bacterial-type ThyA subfamily. As to quaternary structure, homodimer.

It is found in the cytoplasm. It catalyses the reaction dUMP + (6R)-5,10-methylene-5,6,7,8-tetrahydrofolate = 7,8-dihydrofolate + dTMP. The protein operates within pyrimidine metabolism; dTTP biosynthesis. Its function is as follows. Catalyzes the reductive methylation of 2'-deoxyuridine-5'-monophosphate (dUMP) to 2'-deoxythymidine-5'-monophosphate (dTMP) while utilizing 5,10-methylenetetrahydrofolate (mTHF) as the methyl donor and reductant in the reaction, yielding dihydrofolate (DHF) as a by-product. This enzymatic reaction provides an intracellular de novo source of dTMP, an essential precursor for DNA biosynthesis. This Exiguobacterium sp. (strain ATCC BAA-1283 / AT1b) protein is Thymidylate synthase.